A 122-amino-acid polypeptide reads, in one-letter code: Large ribosomal subunit protein uL14 (122 aa).

This sequence belongs to the universal ribosomal protein uL14 family. Part of the 50S ribosomal subunit. Forms a cluster with proteins L3 and L19. In the 70S ribosome, L14 and L19 interact and together make contacts with the 16S rRNA in bridges B5 and B8.

Functionally, binds to 23S rRNA. Forms part of two intersubunit bridges in the 70S ribosome. This Lysinibacillus sphaericus (strain C3-41) protein is Large ribosomal subunit protein uL14.